We begin with the raw amino-acid sequence, 378 residues long: Carbazole 1,9a-dioxygenase, terminal oxygenase component CarAa (378 aa).

Residues 29–135 (WYPVRLASEI…VEEAKGLIFV (107 aa)) enclose the Rieske domain. [2Fe-2S] cluster contacts are provided by cysteine 69, histidine 71, cysteine 90, and histidine 93.

As to quaternary structure, homotrimer. Carbazole 1,9a-dioxygenase complex consists of a terminal oxygenase component CarAa, a ferredoxin reductase component fdr and a ferredoxin component CarAc. It depends on [2Fe-2S] cluster as a cofactor.

The enzyme catalyses 9H-carbazole + NADH + O2 + H(+) = 2'-aminobiphenyl-2,3-diol + NAD(+). The catalysed reaction is 9H-carbazole + NADPH + O2 + H(+) = 2'-aminobiphenyl-2,3-diol + NADP(+). In terms of biological role, part of the multicomponent carbazole 1,9a-dioxygenase (CARDO), that converts carbazole (CAR) into 2-aminobiphenyl-2,3-diol. Catalyzes the dioxygenation at the angular (C-9a) and adjacent (C-1) positions of carbazole to yield a highly unstable cis-hydrodiol intermediate which is spontaneously converted to 2-aminobiphenyl-2,3-diol. The sequence is that of Carbazole 1,9a-dioxygenase, terminal oxygenase component CarAa (carAa) from Sphingomonas sp.